The sequence spans 186 residues: EF-hand protein 5 (186 aa).

The disordered stretch occupies residues Met-1–Gly-23. 4 EF-hand domains span residues Ser-41–Thr-76, Ser-77–Glu-112, Ala-113–His-148, and Ser-149–Met-186. Residues Glu-98, Asp-126, and Thr-130 each coordinate Ca(2+).

The protein is EF-hand protein 5 of Leishmania tarentolae (Sauroleishmania tarentolae).